The chain runs to 349 residues: Ferredoxin--NADP reductase 1 (349 aa).

FAD-binding residues include Glu-36, Lys-44, Tyr-48, Val-88, Leu-123, Asp-290, and Ser-331.

Belongs to the ferredoxin--NADP reductase type 2 family. As to quaternary structure, homodimer. It depends on FAD as a cofactor.

The catalysed reaction is 2 reduced [2Fe-2S]-[ferredoxin] + NADP(+) + H(+) = 2 oxidized [2Fe-2S]-[ferredoxin] + NADPH. The polypeptide is Ferredoxin--NADP reductase 1 (Bacillus licheniformis (strain ATCC 14580 / DSM 13 / JCM 2505 / CCUG 7422 / NBRC 12200 / NCIMB 9375 / NCTC 10341 / NRRL NRS-1264 / Gibson 46)).